Here is a 352-residue protein sequence, read N- to C-terminus: MRADKSLSPFEIRVYRHYRIVHGTRVALAFLLTFLIIRLFTIPESTWPLVTMVVIMGPISFWGNVVPRAFERIGGTVLGSILGLIALQLELISLPLMLVWCAAAMFLCGWLALGKKPYQGLLIGVTLAIVVGSPTGEIDTALWRSGDVILGSLLAMLFTGIWPQRAFIHWRIQLAKSLTEYNRVYQSAFSPNLLERPRLESHLQKLLTDAVKMRGLIAPASKETRIPKSIYEGIQTINRNLVCMLELQINAYWATRPSHFVLLNAQKLRDTQHMMQQILLSLVHALYEGNPQPVFANTEKLNDAVEELRQLLNNHHDLKVVETPIYGYVWLNMETAHQLELLSNLICRALRK.

Over 1 to 25 (MRADKSLSPFEIRVYRHYRIVHGTR) the chain is Cytoplasmic. 2 helical membrane-spanning segments follow: residues 26 to 46 (VALAFLLTFLIIRLFTIPEST) and 47 to 67 (WPLVTMVVIMGPISFWGNVVP). Position 68 (Arg-68) is a topological domain, cytoplasmic. Residues 69–89 (AFERIGGTVLGSILGLIALQL) form a helical membrane-spanning segment. Position 90 (Glu-90) is a topological domain, periplasmic. A helical transmembrane segment spans residues 91 to 111 (LISLPLMLVWCAAAMFLCGWL). Residues 112–117 (ALGKKP) are Cytoplasmic-facing. The helical transmembrane segment at 118–138 (YQGLLIGVTLAIVVGSPTGEI) threads the bilayer. At 139–147 (DTALWRSGD) the chain is on the periplasmic side. A helical membrane pass occupies residues 148-168 (VILGSLLAMLFTGIWPQRAFI). Residues 169–352 (HWRIQLAKSL…SNLICRALRK (184 aa)) lie on the Cytoplasmic side of the membrane.

Its subcellular location is the cell inner membrane. This Escherichia coli (strain K12) protein is Inner membrane protein YeeA (yeeA).